The sequence spans 245 residues: Probable transcriptional regulatory protein Cbei_4222 (245 aa).

It belongs to the TACO1 family.

The protein localises to the cytoplasm. This chain is Probable transcriptional regulatory protein Cbei_4222, found in Clostridium beijerinckii (strain ATCC 51743 / NCIMB 8052) (Clostridium acetobutylicum).